Reading from the N-terminus, the 393-residue chain is Bone morphogenetic protein 15 (393 aa).

Residues 1-25 form the signal peptide; it reads MVLLSILRILLWGLVLFMEHRVQMT. The propeptide occupies 26–268; the sequence is QVGQPSIAHL…DPSLLLRRAR (243 aa). Residues N86 and N237 are each glycosylated (N-linked (GlcNAc...) asparagine). Intrachain disulfides connect C292–C358, C321–C390, and C325–C392. N-linked (GlcNAc...) asparagine glycosylation is present at N374.

This sequence belongs to the TGF-beta family. As to quaternary structure, homodimer. But, in contrast to other members of this family, cannot be disulfide-linked.

It is found in the secreted. May be involved in follicular development. Oocyte-specific growth/differentiation factor that stimulates folliculogenesis and granulosa cell (GC) growth. The sequence is that of Bone morphogenetic protein 15 (BMP15) from Ovis aries (Sheep).